We begin with the raw amino-acid sequence, 539 residues long: Carboxypeptidase Y homolog A (539 aa).

Positions 1–17 (MKALTATLLVGTALAAV) are cleaved as a signal peptide. Residues 18–122 (PPQQPIQVPT…KLEKYDLRVK (105 aa)) constitute a propeptide that is removed on maturation. 5 cysteine pairs are disulfide-bonded: Cys-176/Cys-416, Cys-310/Cys-324, Cys-334/Cys-357, Cys-341/Cys-350, and Cys-379/Cys-386. A glycan (N-linked (GlcNAc...) asparagine) is linked at Asn-207. Ser-263 is an active-site residue. Asp-455 is a catalytic residue. A glycan (N-linked (GlcNAc...) asparagine) is linked at Asn-506. His-517 is a catalytic residue.

The protein belongs to the peptidase S10 family.

It localises to the vacuole. It catalyses the reaction Release of a C-terminal amino acid with broad specificity.. Its function is as follows. Vacuolar carboxypeptidase involved in degradation of small peptides. Digests preferentially peptides containing an aliphatic or hydrophobic residue in P1' position, as well as methionine, leucine or phenylalanine in P1 position of ester substrate. In Coccidioides posadasii (strain C735) (Valley fever fungus), this protein is Carboxypeptidase Y homolog A (cpyA).